The primary structure comprises 155 residues: Ribosome maturation factor RimP (155 aa).

The protein belongs to the RimP family.

The protein localises to the cytoplasm. Required for maturation of 30S ribosomal subunits. This chain is Ribosome maturation factor RimP, found in Exiguobacterium sibiricum (strain DSM 17290 / CCUG 55495 / CIP 109462 / JCM 13490 / 255-15).